The following is a 280-amino-acid chain: MSGLDDRKKLTHAKNRKPLNDIPKSAENRPNTRSTSSRRGAEKDVPITFIGSSRTVKADLPEFTNTRSRRPLHSESKKELSRNPVSRGEEHSSSLPKSSPESSVSVMSSNASLWSACTEEVNKIGVCAKRESRNLRVYKMKSFTSNMEQILSNDNQLAPTVIRILNSRNSWCLNSCHACLTFIMENITSDNYGKRSACLKALASITNSLLDTIIGFASTKTRRIGVDVVAEERAAKATECIHNFRKIVKNRDKIYKQIDQETIYKLDAILERLKKVSSHK.

Residues Met1 to Val104 are disordered. Basic and acidic residues predominate over residues Leu72 to Ser92. Residues Ser93–Val104 are compositionally biased toward low complexity.

As to quaternary structure, interacts with mei-1.

Its subcellular location is the cytoplasm. It localises to the cytoskeleton. The protein resides in the spindle pole. Functionally, forms a heterodimeric complex in conjunction with mei-1 which severs microtubules in vitro in an ATP-dependent manner. This activity may promote rapid reorganization of cellular microtubule arrays. May act to target mei-1 within the cell. Required specifically for meiotic spindle formation in the female germline. In Caenorhabditis elegans, this protein is Meiotic spindle formation protein 2 (mei-2).